The sequence spans 156 residues: Small ribosomal subunit protein uS7 (156 aa).

The protein belongs to the universal ribosomal protein uS7 family. Part of the 30S ribosomal subunit. Contacts proteins S9 and S11.

One of the primary rRNA binding proteins, it binds directly to 16S rRNA where it nucleates assembly of the head domain of the 30S subunit. Is located at the subunit interface close to the decoding center, probably blocks exit of the E-site tRNA. The protein is Small ribosomal subunit protein uS7 of Marinobacter nauticus (strain ATCC 700491 / DSM 11845 / VT8) (Marinobacter aquaeolei).